The chain runs to 126 residues: RutC family protein SSO3206 (126 aa).

The protein belongs to the RutC family.

The sequence is that of RutC family protein SSO3206 from Saccharolobus solfataricus (strain ATCC 35092 / DSM 1617 / JCM 11322 / P2) (Sulfolobus solfataricus).